We begin with the raw amino-acid sequence, 135 residues long: Holo-[acyl-carrier-protein] synthase (135 aa).

Aspartate 8 and glutamate 58 together coordinate Mg(2+).

The protein belongs to the P-Pant transferase superfamily. AcpS family. Mg(2+) serves as cofactor.

It is found in the cytoplasm. It catalyses the reaction apo-[ACP] + CoA = holo-[ACP] + adenosine 3',5'-bisphosphate + H(+). In terms of biological role, transfers the 4'-phosphopantetheine moiety from coenzyme A to a Ser of acyl-carrier-protein. The sequence is that of Holo-[acyl-carrier-protein] synthase from Leuconostoc citreum (strain KM20).